We begin with the raw amino-acid sequence, 321 residues long: uncharacterized protein (321 aa).

Belongs to the NAD(P)-dependent epimerase/dehydratase family.

This is an uncharacterized protein from Staphylococcus aureus (strain COL).